The following is a 203-amino-acid chain: dITP/XTP pyrophosphatase (203 aa).

Ser-8 to Lys-13 provides a ligand contact to substrate. Mg(2+) contacts are provided by Asp-40 and Asp-69. Asp-69 serves as the catalytic Proton acceptor. Residues Ser-70, Phe-152–Asp-155, Lys-175, and His-180–Arg-181 contribute to the substrate site.

It belongs to the HAM1 NTPase family. Homodimer. The cofactor is Mg(2+).

The catalysed reaction is XTP + H2O = XMP + diphosphate + H(+). It carries out the reaction dITP + H2O = dIMP + diphosphate + H(+). It catalyses the reaction ITP + H2O = IMP + diphosphate + H(+). Pyrophosphatase that catalyzes the hydrolysis of nucleoside triphosphates to their monophosphate derivatives, with a high preference for the non-canonical purine nucleotides XTP (xanthosine triphosphate), dITP (deoxyinosine triphosphate) and ITP. Seems to function as a house-cleaning enzyme that removes non-canonical purine nucleotides from the nucleotide pool, thus preventing their incorporation into DNA/RNA and avoiding chromosomal lesions. This chain is dITP/XTP pyrophosphatase, found in Nitrosomonas europaea (strain ATCC 19718 / CIP 103999 / KCTC 2705 / NBRC 14298).